The chain runs to 154 residues: Large ribosomal subunit protein uL13 (154 aa).

Belongs to the universal ribosomal protein uL13 family. As to quaternary structure, part of the 50S ribosomal subunit.

Functionally, this protein is one of the early assembly proteins of the 50S ribosomal subunit, although it is not seen to bind rRNA by itself. It is important during the early stages of 50S assembly. The polypeptide is Large ribosomal subunit protein uL13 (Brucella abortus (strain S19)).